The chain runs to 762 residues: Alpha-1,3-mannosyltransferase MNN1 (762 aa).

The Cytoplasmic segment spans residues 1-16 (MLALRRFILNQRSLRS). The chain crosses the membrane as a helical; Signal-anchor for type II membrane protein span at residues 17 to 33 (CTIPILVGALIIILVLF). Residues 34-762 (QLVTHRNDAL…ELENSRHEQS (729 aa)) are Lumenal-facing. N-linked (GlcNAc...) asparagine glycans are attached at residues Asn50, Asn225, Asn254, and Asn383.

The protein belongs to the MNN1/MNT family.

It is found in the golgi apparatus membrane. It participates in protein modification; protein glycosylation. In terms of biological role, responsible for addition of the terminal mannose residues to the outer chain of core N-linked polysaccharides and to O-linked mannotriose. Implicated in late Golgi modifications. The chain is Alpha-1,3-mannosyltransferase MNN1 (MNN1) from Saccharomyces cerevisiae (strain ATCC 204508 / S288c) (Baker's yeast).